Here is a 1265-residue protein sequence, read N- to C-terminus: 1-phosphatidylinositol 4,5-bisphosphate phosphodiesterase gamma-2 (1265 aa).

The PH domain maps to 20–131 (RALELGTVMT…WLSGLKILHQ (112 aa)). Positions 312 to 456 (QDMNNPLSHY…LREKIIIKHK (145 aa)) constitute a PI-PLC X-box domain. Residues His327 and His372 contribute to the active site. 2 consecutive SH2 domains span residues 532–635 (WFHK…TDPV) and 646–735 (WYYD…RYPV). Phosphotyrosine; by BTK is present on residues Tyr753 and Tyr759. The 61-residue stretch at 769–829 (MPQRTVKALY…PSNYVEDIST (61 aa)) folds into the SH3 domain. In terms of domain architecture, PI-PLC Y-box spans 930 to 1044 (LSDLVVYCKP…GYVLQPESMR (115 aa)). The 132-residue stretch at 1038 to 1169 (LQPESMRTEK…SGFRSVPLKN (132 aa)) folds into the C2 domain. Tyr1197 is modified (phosphotyrosine; by BTK). 2 positions are modified to phosphotyrosine: Tyr1217 and Tyr1245.

Part of a complex composed of EEIG1, TNFRSF11A/RANK, PLCG2, GAB2, TEC and BTK; complex formation increases in the presence of TNFSF11/RANKL. Interacts (via SH2 domain) with CSF1R (tyrosine phosphorylated). Interacts constitutively with THEMIS2. Ca(2+) is required as a cofactor. In terms of processing, phosphorylated on tyrosine residues by CSF1R. Phosphorylated on tyrosine residues by BTK and SYK; upon ligand-induced activation of a variety of growth factor receptors and immune system receptors. Phosphorylation leads to increased phospholipase activity.

Its subcellular location is the membrane raft. The enzyme catalyses a 1,2-diacyl-sn-glycero-3-phospho-(1D-myo-inositol-4,5-bisphosphate) + H2O = 1D-myo-inositol 1,4,5-trisphosphate + a 1,2-diacyl-sn-glycerol + H(+). Functionally, the production of the second messenger molecules diacylglycerol (DAG) and inositol 1,4,5-trisphosphate (IP3) is mediated by activated phosphatidylinositol-specific phospholipase C enzymes. It is a crucial enzyme in transmembrane signaling. The polypeptide is 1-phosphatidylinositol 4,5-bisphosphate phosphodiesterase gamma-2 (Homo sapiens (Human)).